We begin with the raw amino-acid sequence, 142 residues long: MVLSAADKTNVKGVFSKIGGHAEEYGAETLERMFIAYPQTKTYFPHFDLQHGSAQIKAHGKKVAAALVEAVNHIDDIAGALSKLSDLHAQKLRVDPVNFKFLGHCFLVVVAIHHPAALTPEVHASLDKFMCAVGAVLTAKYR.

The 141-residue stretch at 2–142 (VLSAADKTNV…VGAVLTAKYR (141 aa)) folds into the Globin domain. His59 is an O2 binding site. His88 lines the heme b pocket.

The protein belongs to the globin family. Heterotetramer of two alpha chains and two beta chains. Red blood cells.

Functionally, involved in oxygen transport from the lung to the various peripheral tissues. This is Hemoglobin subunit alpha-A (HBAA) from Cairina moschata (Muscovy duck).